The following is a 4540-amino-acid chain: Dynein heavy chain, cytoplasmic (4540 aa).

The tract at residues 1–1796 (MEESETQLNV…LIQMGNAQFH (1796 aa)) is stem. Coiled-coil stretches lie at residues 440-482 (EHIK…NVQQ), 698-722 (RVNYEKKLSQLFKEVRNLSNMKTKV), 794-827 (VKKFTDKVFELEQAVNGLNERIGQIESLCEAMKT), 975-995 (QQLIKDAYSQIGQLLEDMEQY), 1169-1251 (RSKK…LKMD), and 1295-1311 (QNKKIKDTCDEAQKQLN). AAA stretches follow at residues 1797–2018 (YGFE…VLNS), 2091–2348 (KELA…FTRI), 2457–2705 (EIDP…WKYA), and 2796–3056 (QFNE…AKRF). Residues 1835 to 1842 (GPAGTGKT), 2129 to 2136 (GPCGCGKS), 2496 to 2503 (GPPGSGKT), and 2834 to 2841 (GSSGVGKT) each bind ATP. 4 coiled-coil regions span residues 3076–3182 (NEKK…NAKQ), 3289–3367 (QLKY…RSQA), 3653–3688 (EDEKVIQTLEKLKKEAAVIVQEMKQADTIMNEVMNT), and 3820–3851 (QQLKQLEGITQQNQTFNRLIDNLNKNEDRWLN). The tract at residues 3076–3367 (NEKKSQLEDQ…VQEKVTRSQA (292 aa)) is stalk. Residues 3140 to 3159 (KKKEDSTRLSSDAEKKAKEM) are disordered. An AAA 5 region spans residues 3444-3673 (LSRPSDRLNW…LKKEAAVIVQ (230 aa)). The AAA 6 stretch occupies residues 3908–4123 (ARKLINQILG…QRCSLDLIDE (216 aa)). Coiled-coil stretches lie at residues 4238-4259 (QKLITKVQNLQQEGEEEITQIE) and 4313-4342 (RFLDREITVASKLLKAVRQNIEELIQLAQG).

The protein belongs to the dynein heavy chain family. Consists of at least two heavy chains and a number of intermediate and light chains.

The protein localises to the cytoplasm. The protein resides in the cytoskeleton. Cytoplasmic dynein acts as a motor for the intracellular retrograde motility of vesicles and organelles along microtubules. Dynein has ATPase activity; the force-producing power stroke is thought to occur on release of ADP. This Paramecium tetraurelia protein is Dynein heavy chain, cytoplasmic (DHC-8).